Consider the following 120-residue polypeptide: Spermidine export protein MdtJ (120 aa).

4 helical membrane-spanning segments follow: residues 1 to 21 (MFYW…TLSM), 31 to 51 (TGFI…SFAV), 54 to 74 (IALG…ITLF), and 81 to 101 (EALS…IVLI).

The protein belongs to the drug/metabolite transporter (DMT) superfamily. Small multidrug resistance (SMR) (TC 2.A.7.1) family. MdtJ subfamily. Forms a complex with MdtI.

It is found in the cell inner membrane. Its function is as follows. Catalyzes the excretion of spermidine. This is Spermidine export protein MdtJ from Enterobacter sp. (strain 638).